A 117-amino-acid polypeptide reads, in one-letter code: U9-theraphotoxin-Hhn1a (117 aa).

Positions 1–21 (MNTVRVTFLLVFVLAVSLGQA) are cleaved as a signal peptide. A propeptide spanning residues 22-75 (DEDGNRMEMRQEIEKTEADSSYFAENLLLQKLEELEAKLWEETSEESRNSRQKR) is cleaved from the precursor. Intrachain disulfides connect cysteine 76/cysteine 94, cysteine 83/cysteine 99, and cysteine 93/cysteine 114.

Belongs to the neurotoxin 14 (magi-1) family. 01 (HNTX-16) subfamily. As to expression, expressed by the venom gland.

The protein localises to the secreted. Probable ion channel inhibitor. The protein is U9-theraphotoxin-Hhn1a of Cyriopagopus hainanus (Chinese bird spider).